The primary structure comprises 380 residues: Oocyte-specific homeobox protein 4 (380 aa).

Disordered stretches follow at residues 1-25 (MSKD…SFLV), 43-95 (VTPT…RKCR), 152-182 (KSSQ…FAAS), 234-303 (PRQK…CQTP), and 339-380 (TRSK…SSAY). Positions 43–53 (VTPTRPLQSSH) are enriched in polar residues. Residues 54–67 (SVHERDLHQKDSQE) show a composition bias toward basic and acidic residues. A DNA-binding region (homeobox) is located at residues 94 to 153 (CRKERTVYSKEQKCLLQEHFHQCQNPDLEQRKALALLIGVTEYKIQTWFKNRRAKECRKS). The span at 234–250 (PRQKCRELSREPGHLSS) shows a compositional bias: basic and acidic residues. Positions 260-271 (SSPSPAAGAESS) are enriched in low complexity. Composition is skewed to polar residues over residues 278–302 (LSLS…MCQT) and 351–380 (NTVQ…SSAY).

The protein belongs to the paired homeobox family. Obox subfamily. In terms of tissue distribution, specifically expressed in early embryos.

The protein localises to the nucleus. Functionally, transcription factor required for zygotic genome activation (ZGA), a critical event in early embryonic development during which the developmental control passes from maternally provided mRNAs to the expression of the zygotic genome after fertilization. Cannot compensate for loss of other members of the Obox family, suggesting that its function differs from other Obox family members. May regulate expression of histone genes in embryonic stem cells. Also involved in completion of meiosis of oocytes during the meiosis-I/meiosis-II transition. Required to maintain the nuclear membrane of the germinal vesicle in oocytes. The protein is Oocyte-specific homeobox protein 4 of Mus musculus (Mouse).